The following is a 156-amino-acid chain: Transcription elongation factor GreA (156 aa).

Residues 1 to 32 (MKKVRLTREGYEKLKQELEELKRKFMYEISER) are a coiled coil.

The protein belongs to the GreA/GreB family.

In terms of biological role, necessary for efficient RNA polymerase transcription elongation past template-encoded arresting sites. The arresting sites in DNA have the property of trapping a certain fraction of elongating RNA polymerases that pass through, resulting in locked ternary complexes. Cleavage of the nascent transcript by cleavage factors such as GreA or GreB allows the resumption of elongation from the new 3'terminus. GreA releases sequences of 2 to 3 nucleotides. The polypeptide is Transcription elongation factor GreA (Thermotoga neapolitana (strain ATCC 49049 / DSM 4359 / NBRC 107923 / NS-E)).